The sequence spans 154 residues: Jupiter microtubule associated homolog 1 (154 aa).

At M1 the chain carries N-acetylmethionine. A compositionally biased stretch (polar residues) spans 1-19 (MTTTTTFKGVDPNSRNSSR). The segment at 1-154 (MTTTTTFKGV…PGGKSSLVLG (154 aa)) is disordered. Position 2 is an N-acetylthreonine; in Hematological and neurological expressed 1 protein, N-terminally processed (T2). S28 and S31 each carry phosphoserine. Polar residues predominate over residues 47 to 59 (MASNIFGTPEENQ). At T54 the chain carries Phosphothreonine. A compositionally biased stretch (low complexity) spans 60–71 (ASWAKSAGAKSS). S71, S80, S87, S88, and S92 each carry phosphoserine. Residues 80–91 (SGLQRRNSSEAS) are compositionally biased toward polar residues. A compositionally biased stretch (basic and acidic residues) spans 96–108 (LDLKGEGDIHENV). Residues 125–138 (PAAPVPSPVAPAPV) are compositionally biased toward pro residues. Phosphoserine is present on S131. At K148 the chain carries N6-acetyllysine.

The protein belongs to the JUPITER family. Interacts with the complex composed, at least, of APC, CTNNB1 and GSK3B; the interaction takes place with the inactive form of GSK3B (phosphorylated at 'Ser-9'). Expressed in testis, skeletal muscle, thymus, prostate, colon, peripheral blood cells, brain and placenta.

The protein localises to the nucleus. The protein resides in the cytoplasm. In terms of biological role, modulates negatively AKT-mediated GSK3B signaling. Induces CTNNB1 'Ser-33' phosphorylation and degradation through the suppression of the inhibitory 'Ser-9' phosphorylation of GSK3B, which represses the function of the APC:CTNNB1:GSK3B complex and the interaction with CDH1/E-cadherin in adherent junctions. Plays a role in the regulation of cell cycle and cell adhesion. Has an inhibitory role on AR-signaling pathway through the induction of receptor proteasomal degradation. The sequence is that of Jupiter microtubule associated homolog 1 from Homo sapiens (Human).